The following is a 248-amino-acid chain: Ras-like protein family member 11B (248 aa).

Residues 29–246 (AGRRLVKIAV…ALSAKVRTVT (218 aa)) form a small GTPase-like region. GTP-binding positions include 40–47 (GASGVGKT), 87–91 (DTPGI), and 152–155 (NKAD). The tract at residues 205–229 (QQPSGTPEKRRTSLIPRPKSPNMQD) is disordered.

Belongs to the small GTPase superfamily. Ras family.

The catalysed reaction is GTP + H2O = GDP + phosphate + H(+). In Bos taurus (Bovine), this protein is Ras-like protein family member 11B.